The chain runs to 298 residues: Tyrosine recombinase XerC (298 aa).

Positions M1–M84 constitute a Core-binding (CB) domain. The Tyr recombinase domain occupies Y105–L286. Residues R145, K169, H238, R241, and H264 contribute to the active site. Catalysis depends on Y273, which acts as the O-(3'-phospho-DNA)-tyrosine intermediate.

It belongs to the 'phage' integrase family. XerC subfamily. Forms a cyclic heterotetrameric complex composed of two molecules of XerC and two molecules of XerD.

Its subcellular location is the cytoplasm. Functionally, site-specific tyrosine recombinase, which acts by catalyzing the cutting and rejoining of the recombining DNA molecules. The XerC-XerD complex is essential to convert dimers of the bacterial chromosome into monomers to permit their segregation at cell division. It also contributes to the segregational stability of plasmids. This Staphylococcus aureus (strain JH1) protein is Tyrosine recombinase XerC.